The chain runs to 346 residues: UPF0324 membrane protein FN0533 (346 aa).

The next 10 helical transmembrane spans lie at 5–22, 27–49, 62–81, 86–108, 115–137, 147–169, 216–233, 248–270, 283–305, and 315–337; these read LYGIILCFLLALPAWKLG, LVGGPVFGIIIGIVIAILLKNRA, VLQYAVILLGFGLNLQTIIS, SLPIIVSTISTSLIIAYILAKLI, VILIGVGSSICGGSAIAATAPVI, AISVIFLFNVIAALIFPTLGDIL, LTRTLAIIPITLFLAVYN, IFPMFIVYFILASIITTVCNYFI, INNVFSFFKHLSKFFIIMAMVAI, and ILSGAKPLTLGFCCWFAISLVSI.

The protein belongs to the UPF0324 family.

The protein localises to the cell membrane. The sequence is that of UPF0324 membrane protein FN0533 from Fusobacterium nucleatum subsp. nucleatum (strain ATCC 25586 / DSM 15643 / BCRC 10681 / CIP 101130 / JCM 8532 / KCTC 2640 / LMG 13131 / VPI 4355).